Consider the following 265-residue polypeptide: Thiazole synthase (265 aa).

Lysine 106 functions as the Schiff-base intermediate with DXP in the catalytic mechanism. 1-deoxy-D-xylulose 5-phosphate is bound by residues glycine 167, 193–194 (AG), and 215–216 (NT). Positions 245–265 (GRIPRRARAEPSSPQLGLVGS) are disordered.

The protein belongs to the ThiG family. Homotetramer. Forms heterodimers with either ThiH or ThiS.

It is found in the cytoplasm. The enzyme catalyses [ThiS sulfur-carrier protein]-C-terminal-Gly-aminoethanethioate + 2-iminoacetate + 1-deoxy-D-xylulose 5-phosphate = [ThiS sulfur-carrier protein]-C-terminal Gly-Gly + 2-[(2R,5Z)-2-carboxy-4-methylthiazol-5(2H)-ylidene]ethyl phosphate + 2 H2O + H(+). It functions in the pathway cofactor biosynthesis; thiamine diphosphate biosynthesis. Its function is as follows. Catalyzes the rearrangement of 1-deoxy-D-xylulose 5-phosphate (DXP) to produce the thiazole phosphate moiety of thiamine. Sulfur is provided by the thiocarboxylate moiety of the carrier protein ThiS. In vitro, sulfur can be provided by H(2)S. In Methylobacterium sp. (strain 4-46), this protein is Thiazole synthase.